A 397-amino-acid chain; its full sequence is Homocysteine-responsive endoplasmic reticulum-resident ubiquitin-like domain member 2 protein (397 aa).

A Ubiquitin-like domain is found at Val-10–Arg-89. Disordered stretches follow at residues Ala-87–Gly-166 and Ala-210–Pro-246. Low complexity-rich tracts occupy residues Ser-88–Ser-123 and Ala-210–Ala-220. A helical transmembrane segment spans residues Phe-293–Phe-313. Positions Asp-344–Leu-373 are disordered. Residues Glu-345–Asp-360 show a composition bias toward acidic residues.

It localises to the membrane. In terms of biological role, could be involved in the unfolded protein response (UPR) pathway. In Danio rerio (Zebrafish), this protein is Homocysteine-responsive endoplasmic reticulum-resident ubiquitin-like domain member 2 protein (herpud2).